The following is a 274-amino-acid chain: Large ribosomal subunit protein uL2 (274 aa).

The disordered stretch occupies residues 223 to 274 (VAMNPVDHPHGGGEGRTSGGRHPVSPWGMPTKGFKTRKNKSTDKYIVRRRNK).

This sequence belongs to the universal ribosomal protein uL2 family. As to quaternary structure, part of the 50S ribosomal subunit. Forms a bridge to the 30S subunit in the 70S ribosome.

One of the primary rRNA binding proteins. Required for association of the 30S and 50S subunits to form the 70S ribosome, for tRNA binding and peptide bond formation. It has been suggested to have peptidyltransferase activity; this is somewhat controversial. Makes several contacts with the 16S rRNA in the 70S ribosome. This is Large ribosomal subunit protein uL2 from Aliivibrio salmonicida (strain LFI1238) (Vibrio salmonicida (strain LFI1238)).